The chain runs to 264 residues: S-adenosylmethionine decarboxylase proenzyme (264 aa).

Serine 112 (schiff-base intermediate with substrate; via pyruvic acid) is an active-site residue. At serine 112 the chain carries Pyruvic acid (Ser); by autocatalysis. The active-site Proton acceptor; for processing activity is histidine 117. The active-site Proton donor; for catalytic activity is the cysteine 140.

This sequence belongs to the prokaryotic AdoMetDC family. Type 2 subfamily. In terms of assembly, heterooctamer of four alpha and four beta chains arranged as a tetramer of alpha/beta heterodimers. The cofactor is pyruvate. In terms of processing, is synthesized initially as an inactive proenzyme. Formation of the active enzyme involves a self-maturation process in which the active site pyruvoyl group is generated from an internal serine residue via an autocatalytic post-translational modification. Two non-identical subunits are generated from the proenzyme in this reaction, and the pyruvate is formed at the N-terminus of the alpha chain, which is derived from the carboxyl end of the proenzyme. The post-translation cleavage follows an unusual pathway, termed non-hydrolytic serinolysis, in which the side chain hydroxyl group of the serine supplies its oxygen atom to form the C-terminus of the beta chain, while the remainder of the serine residue undergoes an oxidative deamination to produce ammonia and the pyruvoyl group blocking the N-terminus of the alpha chain.

The catalysed reaction is S-adenosyl-L-methionine + H(+) = S-adenosyl 3-(methylsulfanyl)propylamine + CO2. The protein operates within amine and polyamine biosynthesis; S-adenosylmethioninamine biosynthesis; S-adenosylmethioninamine from S-adenosyl-L-methionine: step 1/1. Functionally, catalyzes the decarboxylation of S-adenosylmethionine to S-adenosylmethioninamine (dcAdoMet), the propylamine donor required for the synthesis of the polyamines spermine and spermidine from the diamine putrescine. The protein is S-adenosylmethionine decarboxylase proenzyme of Sodalis glossinidius (strain morsitans).